Reading from the N-terminus, the 412-residue chain is Glutamyl-tRNA reductase (412 aa).

Residues 52–55 (TCNR), Ser108, 113–115 (EYE), and Gln119 each bind substrate. Cys53 serves as the catalytic Nucleophile. 189-194 (GAGEIG) contributes to the NADP(+) binding site.

Belongs to the glutamyl-tRNA reductase family. In terms of assembly, homodimer.

The enzyme catalyses (S)-4-amino-5-oxopentanoate + tRNA(Glu) + NADP(+) = L-glutamyl-tRNA(Glu) + NADPH + H(+). The protein operates within porphyrin-containing compound metabolism; protoporphyrin-IX biosynthesis; 5-aminolevulinate from L-glutamyl-tRNA(Glu): step 1/2. Its function is as follows. Catalyzes the NADPH-dependent reduction of glutamyl-tRNA(Glu) to glutamate 1-semialdehyde (GSA). This chain is Glutamyl-tRNA reductase, found in Sulfurisphaera tokodaii (strain DSM 16993 / JCM 10545 / NBRC 100140 / 7) (Sulfolobus tokodaii).